A 269-amino-acid polypeptide reads, in one-letter code: 3-methyl-2-oxobutanoate hydroxymethyltransferase (269 aa).

Mg(2+)-binding residues include Asp-42 and Asp-81. 3-methyl-2-oxobutanoate-binding positions include 42-43 (DS), Asp-81, and Lys-111. Glu-113 contacts Mg(2+). The Proton acceptor role is filled by Glu-179. The interval 250–269 (SGEFPRESHSHTEDELDDLY) is disordered. The segment covering 252-262 (EFPRESHSHTE) has biased composition (basic and acidic residues).

This sequence belongs to the PanB family. In terms of assembly, homodecamer; pentamer of dimers. The cofactor is Mg(2+).

Its subcellular location is the cytoplasm. The enzyme catalyses 3-methyl-2-oxobutanoate + (6R)-5,10-methylene-5,6,7,8-tetrahydrofolate + H2O = 2-dehydropantoate + (6S)-5,6,7,8-tetrahydrofolate. It functions in the pathway cofactor biosynthesis; coenzyme A biosynthesis. Its function is as follows. Catalyzes the reversible reaction in which hydroxymethyl group from 5,10-methylenetetrahydrofolate is transferred onto alpha-ketoisovalerate to form ketopantoate. This chain is 3-methyl-2-oxobutanoate hydroxymethyltransferase, found in Haloarcula marismortui (strain ATCC 43049 / DSM 3752 / JCM 8966 / VKM B-1809) (Halobacterium marismortui).